An 885-amino-acid polypeptide reads, in one-letter code: DNA-directed RNA polymerase subunit Rpo1N (885 aa).

Residues cysteine 60, cysteine 63, cysteine 70, histidine 73, cysteine 100, cysteine 103, cysteine 150, and cysteine 153 each contribute to the Zn(2+) site. Mg(2+)-binding residues include aspartate 464, aspartate 466, and aspartate 468.

Belongs to the RNA polymerase beta' chain family. As to quaternary structure, part of the RNA polymerase complex. Mg(2+) serves as cofactor. It depends on Zn(2+) as a cofactor.

It localises to the cytoplasm. The enzyme catalyses RNA(n) + a ribonucleoside 5'-triphosphate = RNA(n+1) + diphosphate. Its function is as follows. DNA-dependent RNA polymerase (RNAP) catalyzes the transcription of DNA into RNA using the four ribonucleoside triphosphates as substrates. Forms the clamp head domain. This Thermoplasma acidophilum (strain ATCC 25905 / DSM 1728 / JCM 9062 / NBRC 15155 / AMRC-C165) protein is DNA-directed RNA polymerase subunit Rpo1N.